A 41-amino-acid chain; its full sequence is Large ribosomal subunit protein bL36 (41 aa).

This sequence belongs to the bacterial ribosomal protein bL36 family.

In Brucella abortus (strain S19), this protein is Large ribosomal subunit protein bL36.